A 112-amino-acid chain; its full sequence is uncharacterized protein (112 aa).

The span at 1-11 shows a compositional bias: polar residues; the sequence is MAESVASSESL. The disordered stretch occupies residues 1–32; that stretch reads MAESVASSESLPQMKPEEPESKKSPSREAIPK. The segment covering 15–31 has biased composition (basic and acidic residues); that stretch reads KPEEPESKKSPSREAIP. The helical transmembrane segment at 81-101 threads the bilayer; the sequence is VVFIFMIAIMSMLVIGLVVCG.

The protein resides in the membrane. This is an uncharacterized protein from Encephalitozoon cuniculi (strain GB-M1) (Microsporidian parasite).